We begin with the raw amino-acid sequence, 477 residues long: Glycogen synthase (477 aa).

K15 is a binding site for ADP-alpha-D-glucose.

It belongs to the glycosyltransferase 1 family. Bacterial/plant glycogen synthase subfamily.

It carries out the reaction [(1-&gt;4)-alpha-D-glucosyl](n) + ADP-alpha-D-glucose = [(1-&gt;4)-alpha-D-glucosyl](n+1) + ADP + H(+). Its pathway is glycan biosynthesis; glycogen biosynthesis. Synthesizes alpha-1,4-glucan chains using ADP-glucose. This is Glycogen synthase from Streptococcus pneumoniae serotype 4 (strain ATCC BAA-334 / TIGR4).